A 900-amino-acid chain; its full sequence is Phospholipase DDHD1 (900 aa).

Disordered stretches follow at residues 1–28 (MNYPGRGSPRSPEHNGRGGGGGAWELGS), 100–152 (LRYY…GGPA), and 202–233 (GARPQGGDRDGDHVCSPTGPASSSGEDDDEDR). 2 positions are modified to phosphoserine: Ser8 and Ser11. Over residues 130-140 (SGGGGATGGSP) the composition is skewed to gly residues. Residue Ser537 is part of the active site. Positions 611–886 (LKFKVENFFC…ALFLLTFMYK (276 aa)) constitute a DDHD domain. 2 disordered regions span residues 706-725 (AKEPTSVSENEGISTIPSPV) and 768-801 (SSTTQSSETSKDSMEDEKKPVASPSATTVGTQTL). Polar residues predominate over residues 710 to 725 (TSVSENEGISTIPSPV). Ser723 carries the phosphoserine modification. A compositionally biased stretch (basic and acidic residues) spans 776–787 (TSKDSMEDEKKP). A compositionally biased stretch (polar residues) spans 791-801 (PSATTVGTQTL).

This sequence belongs to the PA-PLA1 family. In terms of assembly, forms homooligomers and, to a much smaller extent, heterooligomers with DDHD2. In terms of tissue distribution, highly expressed in testis. Also expressed in brain, spleen and lung. Only expressed in cerebellum in fetal brain.

It is found in the cytoplasm. It catalyses the reaction a 1,2-diacyl-sn-glycero-3-phosphate + H2O = a 2-acyl-sn-glycerol 3-phosphate + a fatty acid + H(+). The catalysed reaction is a 1,2-diacyl-sn-glycero-3-phospho-(1D-myo-inositol) + H2O = a 2-acyl-sn-glycero-3-phospho-D-myo-inositol + a fatty acid + H(+). It carries out the reaction 1-octadecanoyl-2-(5Z,8Z,11Z,14Z-eicosatetraenoyl)-sn-glycero-3-phospho-(1D-myo-inositol) + H2O = 2-(5Z,8Z,11Z,14Z-eicosatetraenoyl)-sn-glycero-3-phospho-(1D-myo-inositol) + octadecanoate + H(+). The enzyme catalyses a 1-acyl-2-(5Z,8Z,11Z,14Z-eicosatetraenoyl)-sn-glycero-3-phospho-(1D-myo-inositol) + H2O = 2-(5Z,8Z,11Z,14Z-eicosatetraenoyl)-sn-glycero-3-phospho-(1D-myo-inositol) + a fatty acid + H(+). It catalyses the reaction 1,2-dihexadecanoyl-sn-glycero-3-phospho-(1D-myo-inositol) + H2O = 2-hexadecanoyl-sn-glycero-3-phospho-(1D-myo-inositol) + hexadecanoate + H(+). The catalysed reaction is a 1-acyl-2-(5Z,8Z,11Z,14Z)-eicosatetraenoyl-sn-glycero-3-phosphate + H2O = 2-(5Z,8Z,11Z,14Z-eicosatetraenoyl)-sn-glycero-3-phosphate + a fatty acid + H(+). It carries out the reaction 1,2-di-(9Z-octadecenoyl)-sn-glycero-3-phosphate + H2O = 2-(9Z-octadecenoyl)-sn-glycero-3-phosphate + (9Z)-octadecenoate + H(+). The enzyme catalyses 1-hexadecanoyl-2-(9Z-octadecenoyl)-sn-glycero-3-phosphate + H2O = 2-(9Z-octadecenoyl)-sn-glycero-3-phosphate + hexadecanoate + H(+). It catalyses the reaction 1-hexadecanoyl-2-(9Z-octadecenoyl)-sn-glycero-3-phospho-L-serine + H2O = 2-(9Z-octadecenoyl)-sn-glycero-3-phospho-L-serine + hexadecanoate + H(+). The catalysed reaction is 1,2-di-(5Z,8Z,11Z,14Z)-eicosatetraenoyl-sn-glycero-3-phosphate + H2O = 2-(5Z,8Z,11Z,14Z-eicosatetraenoyl)-sn-glycero-3-phosphate + (5Z,8Z,11Z,14Z)-eicosatetraenoate + H(+). It carries out the reaction 1-octadecanoyl-2-(5Z,8Z,11Z,14Z-eicosatetraenoyl)-sn-glycero-3-phosphate + H2O = 2-(5Z,8Z,11Z,14Z-eicosatetraenoyl)-sn-glycero-3-phosphate + octadecanoate + H(+). The enzyme catalyses a 1,2-diacyl-sn-glycero-3-phosphocholine + H2O = a 2-acyl-sn-glycero-3-phosphocholine + a fatty acid + H(+). It catalyses the reaction a 1,2-diacyl-sn-glycero-3-phosphoethanolamine + H2O = a 2-acyl-sn-glycero-3-phosphoethanolamine + a fatty acid + H(+). The catalysed reaction is a 1,2-diacyl-sn-glycero-3-phospho-L-serine + H2O = a 2-acyl-sn-glycero-3-phospho-L-serine + a fatty acid + H(+). It carries out the reaction a 1,2-diacyl-sn-glycero-3-phospho-(1'-sn-glycerol) + H2O = 2-acyl-sn-glycero-3-phospho-(1'-sn-glycerol) + a fatty acid + H(+). The enzyme catalyses 1-hexadecanoyl-2-(9Z-octadecenoyl)-sn-glycero-3-phospho-(1'-sn-glycerol) + H2O = 2-(9Z-octadecenoyl)-sn-glycero-3-phospho-(1'-sn-glycerol) + hexadecanoate + H(+). It catalyses the reaction 1-acyl-2-(5Z,8Z,11Z,14Z-eicosatetraenoyl)-sn-glycero-3-phosphocholine + H2O = 2-(5Z,8Z,11Z,14Z)-eicosatetraenoyl-sn-glycero-3-phosphocholine + a fatty acid + H(+). The catalysed reaction is 1-acyl-2-(5Z,8Z,11Z,14Z)-eicosatetraenoyl-sn-glycero-3-phosphoethanolamine + H2O = 2-(5Z,8Z,11Z,14Z)-eicosatetraenoyl-sn-glycero-3-phosphoethanolamine + a fatty acid + H(+). It carries out the reaction 1-(9Z-octadecenoyl)-2-(7Z,10Z,13Z,16Z,19Z-docosapentaenoyl)-sn-glycero-3-phospho-1D-myo-inositol + H2O = 2-(7Z,10Z,13Z,16Z,19Z-docosapentaenoyl)-sn-glycero-3-phospho-1D-myo-inositol + (9Z)-octadecenoate + H(+). The enzyme catalyses 1-(9Z-octadecenoyl)-2-(5Z,8Z,11Z,14Z-eicosatetraenoyl)-sn-glycero-3-phospho-1D-myo-inositol + H2O = 2-(5Z,8Z,11Z,14Z-eicosatetraenoyl)-sn-glycero-3-phospho-(1D-myo-inositol) + (9Z)-octadecenoate + H(+). It catalyses the reaction 1,2-di-(9Z-octadecenoyl)-sn-glycero-3-phospho-1D-myo-inositol + H2O = 2-(9Z-octadecenoyl)-sn-glycero-3-phospho-1D-myo-inositol + (9Z)-octadecenoate + H(+). The catalysed reaction is 1-(9Z-octadecenoyl)-2-(8Z,11Z,14Z-eicosatrienoyl)-sn-glycero-3-phospho-1D-myo-inositol + H2O = 2-(8Z,11Z,14Z-eicosatrienoyl)-sn-glycero-3-phospho-1D-myo-inositol + (9Z)-octadecenoate + H(+). It carries out the reaction 1,2-di-(9Z-octadecenoyl)-sn-glycero-3-phosphocholine + H2O = (9Z-octadecenoyl)-sn-glycero-3-phosphocholine + (9Z)-octadecenoate + H(+). It participates in phospholipid metabolism; phosphatidylinositol metabolism. Phosphatidate (1,2-diacyl-sn-glycero-3-phosphate, PA) can positively regulate phospholipase A1 activity. Functionally, phospholipase A1 (PLA1) that hydrolyzes ester bonds at the sn-1 position of glycerophospholipids producing a free fatty acid and a lysophospholipid. Prefers phosphatidate (1,2-diacyl-sn-glycero-3-phosphate, PA) as substrate in vitro, but can efficiently hydrolyze phosphatidylinositol (1,2-diacyl-sn-glycero-3-phospho-(1D-myo-inositol), PI), as well as a range of other glycerophospholipid substrates such as phosphatidylcholine (1,2-diacyl-sn-glycero-3-phosphocholine, PC), phosphatidylethanolamine (1,2-diacyl-sn-glycero-3-phosphoethanolamine, PE), phosphatidylserine (1,2-diacyl-sn-glycero-3-phospho-L-serine, PS) and phosphatidylglycerol (1,2-diacyl-sn-glycero-3-phospho-(1'-sn-glycerol), PG). Involved in the regulation of the endogenous content of polyunsaturated PI and PS lipids in the nervous system. Changes in these lipids extend to downstream metabolic products like PI phosphates PIP and PIP2, which play fundamental roles in cell biology. Regulates mitochondrial morphology. These dynamic changes may be due to PA hydrolysis at the mitochondrial surface. May play a regulatory role in spermatogenesis or sperm function. In Homo sapiens (Human), this protein is Phospholipase DDHD1.